Consider the following 496-residue polypeptide: Cyclin-dependent kinase 16 (496 aa).

Residues 1-97 (MDRMKKIKRQ…TSSDEVQSPV (97 aa)) are disordered. Phosphoserine; by BRSK2 is present on Ser12. Residues Ser36, Ser42, Ser64, Ser65, Ser78, Ser82, and Ser89 each carry the phosphoserine modification. Residues 69-78 (IVHEDLKMGS) show a composition bias toward basic and acidic residues. Positions 83–93 (DQASATSSDEV) are enriched in polar residues. A Phosphoserine; by CDK5 modification is found at Ser95. Phosphoserine occurs at positions 110, 119, 138, 146, 153, and 155. The Protein kinase domain maps to 165–446 (YIKLDKLGEG…AEDAMKHPFF (282 aa)). ATP is bound by residues 171–179 (LGEGTYATV) and Lys194. At Thr175 the chain carries Phosphothreonine. The Proton acceptor role is filled by Asp286. Thr380 is modified (phosphothreonine). Phosphoserine occurs at positions 391, 478, and 480.

It belongs to the protein kinase superfamily. CMGC Ser/Thr protein kinase family. CDC2/CDKX subfamily. In terms of assembly, found in a complex containing CABLES1, CDK17 and TDRD7. Interacts with BRSK2. Identified in a complex with NSF, syntaxin-1, synaptotagmin, SYN1, SYP and CDK5R1. Interacts with YWHAH, YWHAQ and YWHAZ. Interacts with CCNY; this interaction increases the CDK16 kinase activity. Interacts with CCNYL1; this interaction mutually increases the stability of CDK16 and CCNYL1 and increases the kinase activity of CDK16. Interacts with NSF. Phosphorylation of CDK16 is essential for the binding of CCNY, but also essential for the regulation of CDK16 kinase activity. Phosphorylation of CDK16 is essential for the binding of CCNYl1, but also essential for the regulation of CDK16 kinase activity. Ser-146 and Ser-153 are the most critical sites for the binding of CCNYL1 and for modulating CDK16 kinase activity. Phosphorylation at Ser-153 inhibits kinase activity. Detected in pancreas islets (at protein level). Detected in brain and pancreas.

The protein resides in the cytoplasm. The protein localises to the cytoplasmic vesicle. Its subcellular location is the secretory vesicle. It localises to the cell membrane. It is found in the synapse. The protein resides in the synaptosome. The enzyme catalyses L-seryl-[protein] + ATP = O-phospho-L-seryl-[protein] + ADP + H(+). It catalyses the reaction L-threonyl-[protein] + ATP = O-phospho-L-threonyl-[protein] + ADP + H(+). Its function is as follows. Protein kinase that plays a role in vesicle-mediated transport processes and exocytosis. Regulates GH1 release by brain neurons. Phosphorylates NSF, and thereby regulates NSF oligomerization. Required for normal spermatogenesis. Regulates neuron differentiation and dendrite development. Plays a role in the regulation of insulin secretion in response to changes in blood glucose levels. Can phosphorylate CCNY at 'Ser-336' (in vitro). The chain is Cyclin-dependent kinase 16 (CDK16) from Homo sapiens (Human).